The primary structure comprises 287 residues: Elongation factor Ts (287 aa).

Residues 80–83 (TDFL) form an involved in Mg(2+) ion dislocation from EF-Tu region.

This sequence belongs to the EF-Ts family.

It localises to the cytoplasm. Associates with the EF-Tu.GDP complex and induces the exchange of GDP to GTP. It remains bound to the aminoacyl-tRNA.EF-Tu.GTP complex up to the GTP hydrolysis stage on the ribosome. This chain is Elongation factor Ts, found in Pseudomonas savastanoi pv. phaseolicola (strain 1448A / Race 6) (Pseudomonas syringae pv. phaseolicola (strain 1448A / Race 6)).